Reading from the N-terminus, the 707-residue chain is Choline transporter-like protein 4 (707 aa).

Residues 1–32 (MGRKQNENEAHGNSAKYDPSFRGPIKNRGCTD) lie on the Cytoplasmic side of the membrane. A helical transmembrane segment spans residues 33–53 (IICCVLFLIFILGYIIVGLVA). The Extracellular segment spans residues 54 to 227 (WVYGDPRQVL…KIFEDFAQSW (174 aa)). N-linked (GlcNAc...) asparagine glycosylation is found at N67, N185, N195, and N196. The chain crosses the membrane as a helical span at residues 228–248 (YWILVALGVALALSLLFILLL). The Cytoplasmic segment spans residues 249 to 250 (RL). Residues 251–271 (VAAPLVLLLIVGVLAVLAYGI) traverse the membrane as a helical segment. Residues 272–307 (YHCWQQYQVFRDKGASITQLGFTTNFSAYQSVKETW) lie on the Extracellular side of the membrane. The N-linked (GlcNAc...) asparagine glycan is linked to N296. A helical transmembrane segment spans residues 308–328 (LAALIVLAVLEGILLLMLIFL). Residues 329 to 356 (RQRIRIAIALLKEASRAVGQMMSTMFYP) lie on the Cytoplasmic side of the membrane. Residues 357-377 (LVTFVLLVICIGYWAVTALYL) traverse the membrane as a helical segment. Topologically, residues 378-452 (ATSGQPQYIY…GVLGLFWTVN (75 aa)) are extracellular. N391, N403, and N413 each carry an N-linked (GlcNAc...) asparagine glycan. Residues 453–473 (WVLALGQCVLAGAFASFYWAF) traverse the membrane as a helical segment. The Cytoplasmic segment spans residues 474-498 (HKPRDIPTFPLSSAFIRTLRYHTGS). The helical transmembrane segment at 499–519 (LAFGALILSLVQIARVILEYI) threads the bilayer. Over 520–557 (DHKLRGSQNPVARCIICCFKCCLWCLEKFIKFLNRNAY) the chain is Extracellular. Residues 558–578 (IMIAIYGKNFCVSAKNAFMLL) traverse the membrane as a helical segment. At 579-594 (MRNVLRVVVLDKVTDL) the chain is on the cytoplasmic side. Residues 595–615 (LLFFGKLLVVGGVGVLSFFFF) form a helical membrane-spanning segment. Topologically, residues 616-635 (SGRIKGLGKDFENPNLNYYW) are extracellular. Residues 636 to 656 (LPIMTSIMGAYVIASGFFSVF) form a helical membrane-spanning segment. Residues 657–707 (GMCVDTLFLCFLEDLERNDGSQERPYYMPKALLKILGKKNEAPTGGKTRKK) lie on the Cytoplasmic side of the membrane.

This sequence belongs to the CTL (choline transporter-like) family. Post-translationally, N-glycosylated; N-glycosylation of Asn-67 and Asn-391 is required for a proper thiamine pyrophosphate uptake. As to expression, expressed in colon and cecum.

Its subcellular location is the membrane. It is found in the apical cell membrane. The catalysed reaction is choline(out) + n H(+)(in) = choline(in) + n H(+)(out). The enzyme catalyses thiamine diphosphate(out) = thiamine diphosphate(in). Choline transporter that plays a role in the choline-acetylcholine system and is required to the efferent innervation of hair cells in the olivocochlear bundle for the maintenance of physiological function of outer hair cells and the protection of hair cells from acoustic injury. Also described as a thiamine pyrophosphate transporter in colon, may mediate the absorption of microbiota-generated thiamine pyrophosphate and contribute to host thiamine (vitamin B1) homeostasis. The chain is Choline transporter-like protein 4 from Mus musculus (Mouse).